The sequence spans 98 residues: Beta-elicitin DRE-beta (98 aa).

Intrachain disulfides connect cysteine 3–cysteine 71, cysteine 27–cysteine 56, and cysteine 51–cysteine 95.

The protein belongs to the elicitin family.

The protein resides in the secreted. In terms of biological role, induces local and distal defense responses (incompatible hypersensitive reaction) in plants from the solanaceae and cruciferae families. Elicits leaf necrosis and causes the accumulation of pathogenesis-related proteins. Might interact with the lipidic molecules of the plasma membrane. This Phytophthora drechsleri protein is Beta-elicitin DRE-beta.